The chain runs to 128 residues: Prokineticin-2 (128 aa).

A signal peptide spans 1–26; it reads MGDPRCAPLLLLLLLPLLFTPPAGDA. Disulfide bonds link Cys33/Cys45, Cys39/Cys57, Cys44/Cys106, Cys67/Cys114, and Cys108/Cys124.

This sequence belongs to the AVIT (prokineticin) family. As to expression, expressed in the SCN and among a few other discrete brain areas, including the islands of Calleja, media l preoptic area of the hypothalamus and the shell of the nucleus accumbens. Highly expressed in testis. In the SCN, expression subjected to high amplitude of circadian oscillation.

It is found in the secreted. In terms of biological role, may function as an output molecule from the suprachiasmatic nucleus (SCN) that transmits behavioral circadian rhythm. May also function locally within the SCN to synchronize output. Potently contracts gastrointestinal (GI) smooth muscle. The polypeptide is Prokineticin-2 (Prok2) (Mus musculus (Mouse)).